We begin with the raw amino-acid sequence, 163 residues long: uncharacterized protein (163 aa).

The helical transmembrane segment at 11-31 threads the bilayer; the sequence is LSWFLLLVVVILIFFLLLSCL.

It localises to the membrane. This is an uncharacterized protein from Saccharomyces cerevisiae (strain ATCC 204508 / S288c) (Baker's yeast).